Reading from the N-terminus, the 729-residue chain is Leucine-rich repeat flightless-interacting protein 1 (729 aa).

Thr-2 bears the N-acetylthreonine mark. The residue at position 16 (Ser-16) is a Phosphoserine. The span at 40–65 (IRMKELERQQKEVEERPDKDFAEKGS) shows a compositional bias: basic and acidic residues. Residues 40–98 (IRMKELERQQKEVEERPDKDFAEKGSRNMPSLSAATLASLGGTSSRRGSGDTSISMDTE) form a disordered region. A compositionally biased stretch (low complexity) spans 78–94 (SLGGTSSRRGSGDTSIS). 6 positions are modified to phosphoserine: Ser-83, Ser-84, Ser-88, Asp-90, Ser-92, and Thr-97. A coiled-coil region spans residues 94 to 194 (SMDTEASIRE…LRQREEMLEK (101 aa)). Residue Lys-249 forms a Glycyl lysine isopeptide (Lys-Gly) (interchain with G-Cter in SUMO1) linkage. A disordered region spans residues 253–729 (VEKVGQRETL…SKSKEDCTMS (477 aa)). Residues 260–272 (ETLQNSEQEQPKP) are compositionally biased toward polar residues. A compositionally biased stretch (basic and acidic residues) spans 277–297 (DCVDRGVSHPGEKAENQRPAE). Phosphoserine is present on Ser-302. Positions 313-326 (QQVQSQDQENTSDL) are enriched in polar residues. Basic and acidic residues predominate over residues 327–343 (KNSEQIESHKVTNKSDS). Polar residues predominate over residues 344–354 (RASNSPEQSSC). Phosphoserine occurs at positions 346 and 348. Composition is skewed to basic and acidic residues over residues 435–445 (KGTENHGESCL) and 482–494 (KADDAEGRDEKPI). The tract at residues 465 to 567 (EEAIVQIPQA…KNKKKKAATP (103 aa)) is DNA-binding. A compositionally biased stretch (polar residues) spans 506 to 523 (INQSGHQDTTGPGSTDAQ). 2 positions are modified to phosphoserine: Ser-538 and Ser-547. The segment covering 550-564 (KKTKNKKKKNKKKKA) has biased composition (basic residues). The span at 608 to 618 (QKIRAGSREPV) shows a compositional bias: basic and acidic residues. Ser-614 and Ser-670 each carry phosphoserine. 2 stretches are compositionally biased toward polar residues: residues 667-684 (CDTSQIGSEEGHVTSQHG) and 693-710 (LDNSDLSGQLEGFNSESG). Residues 713 to 729 (AREEVGNSKSKEDCTMS) show a composition bias toward basic and acidic residues.

It belongs to the LRRFIP family. Homodimer. May also form higher oligomers. Interacts with FLII. Interacts with MYD88. Competes with FLII for MyD88-binding, even in the absence of LPS. Ubiquitously expressed.

It localises to the nucleus. It is found in the cytoplasm. In terms of biological role, transcriptional repressor which preferentially binds to the GC-rich consensus sequence (5'-AGCCCCCGGCG-3') and may regulate expression of TNF, EGFR and PDGFA. May control smooth muscle cells proliferation following artery injury through PDGFA repression. May also bind double-stranded RNA. Positively regulates Toll-like receptor (TLR) signaling in response to agonist probably by competing with the negative FLII regulator for MYD88-binding. The sequence is that of Leucine-rich repeat flightless-interacting protein 1 (Lrrfip1) from Mus musculus (Mouse).